An 817-amino-acid chain; its full sequence is Rho GTPase-activating protein gacII (817 aa).

A Rho-GAP domain is found at 20-204 (TTIVKIGTPK…TLIEEFQYIS (185 aa)). The region spanning 238–298 (EDYLIAKANT…SQTYVDIIDI (61 aa)) is the SH3 domain. The span at 318 to 339 (ASTILHTPPTSSSSSSSSSSSS) shows a compositional bias: low complexity. Disordered regions lie at residues 318-638 (ASTI…NIPV), 691-771 (LGGQ…QQQQ), and 783-817 (LPPQ…FNKN). Over residues 340–358 (ILLTDNQPKLCSSTPRINN) the composition is skewed to polar residues. Positions 359–391 (SPSSFSPSLSSTTPQLLVQQSPRQSPRQIPSIS) are enriched in low complexity. Residues 396–438 (PNNTNQPSFGHGTLQRTSTGYFSSKPLSISQPINMSKPTNMSP) show a composition bias toward polar residues. Pro residues predominate over residues 461–471 (PPLPTKPPPLT). Low complexity predominate over residues 472–498 (IPSSSSLPTTPIKQQPQQPIQQPLTPQ). The span at 509–532 (LSSSVNTANTGNCANILSPNSDRY) shows a compositional bias: polar residues. 3 stretches are compositionally biased toward low complexity: residues 534 to 568 (SSRS…SSTS), 577 to 587 (KSKSSKNSPSK), and 607 to 624 (ITTT…TIAT). Over residues 625–635 (TPPPPSKPLPN) the composition is skewed to pro residues. Residues 705-722 (KSQSSYLDNNNLPSRNTN) show a composition bias toward polar residues. A compositionally biased stretch (pro residues) spans 725-734 (NLPPRPPPLN). Composition is skewed to low complexity over residues 735–744 (IPQQQQQYKP) and 752–771 (QSPQ…QQQQ). Over residues 785–803 (PQNTNLSGKNLQRSSTSML) the composition is skewed to polar residues. Residues 807-817 (LPPPPFSFNKN) are compositionally biased toward pro residues.

It is found in the cytoplasm. Rho GTPase-activating protein involved in the signal transduction pathway. The chain is Rho GTPase-activating protein gacII (gacII) from Dictyostelium discoideum (Social amoeba).